The primary structure comprises 171 residues: MTKQNAFTREDLLRCSRGELFGPGNAQLPAPNMLMVDRITLISEEGGKYGKGELVAELDINPDLWFFACHFEGDPVMPGCLGLDAMWQLVGFFLGWQGLPGRGRALGSGEVKFFGQVLPTAKKVTYNIHIKRVLKGKLNLAIADGSVTVDGREIYTAEGLRVGVFTSTDNF.

The active site involves His-70.

It belongs to the thioester dehydratase family. FabA subfamily. Homodimer.

The protein resides in the cytoplasm. The enzyme catalyses a (3R)-hydroxyacyl-[ACP] = a (2E)-enoyl-[ACP] + H2O. It catalyses the reaction (3R)-hydroxydecanoyl-[ACP] = (2E)-decenoyl-[ACP] + H2O. The catalysed reaction is (2E)-decenoyl-[ACP] = (3Z)-decenoyl-[ACP]. It functions in the pathway lipid metabolism; fatty acid biosynthesis. Functionally, necessary for the introduction of cis unsaturation into fatty acids. Catalyzes the dehydration of (3R)-3-hydroxydecanoyl-ACP to E-(2)-decenoyl-ACP and then its isomerization to Z-(3)-decenoyl-ACP. Can catalyze the dehydratase reaction for beta-hydroxyacyl-ACPs with saturated chain lengths up to 16:0, being most active on intermediate chain length. This chain is 3-hydroxydecanoyl-[acyl-carrier-protein] dehydratase, found in Pseudomonas fluorescens (strain Pf0-1).